A 288-amino-acid polypeptide reads, in one-letter code: Alpha-acetolactate decarboxylase (288 aa).

Residues 1–23 (MNIKYFLIFLILLAVTSFTLFSG) form the signal peptide.

It belongs to the alpha-acetolactate decarboxylase family.

The catalysed reaction is (2S)-2-acetolactate + H(+) = (R)-acetoin + CO2. Its pathway is polyol metabolism; (R,R)-butane-2,3-diol biosynthesis; (R,R)-butane-2,3-diol from pyruvate: step 2/3. Its function is as follows. Converts acetolactate into acetoin. This chain is Alpha-acetolactate decarboxylase, found in Methanosarcina mazei (strain ATCC BAA-159 / DSM 3647 / Goe1 / Go1 / JCM 11833 / OCM 88) (Methanosarcina frisia).